The sequence spans 278 residues: Tetraspanin-13 (278 aa).

Over Met1–Thr25 the chain is Cytoplasmic. Residues Ile26 to Met46 traverse the membrane as a helical segment. The Extracellular portion of the chain corresponds to Thr47–Pro62. Residues Gly63–Phe83 traverse the membrane as a helical segment. Residues Lys84–His92 lie on the Cytoplasmic side of the membrane. Residues Phe93–Leu113 traverse the membrane as a helical segment. The Extracellular portion of the chain corresponds to His114–Thr249. Asn202, Asn220, and Asn243 each carry an N-linked (GlcNAc...) asparagine glycan. The helical transmembrane segment at Val250–Leu270 threads the bilayer. Residues Arg271–Lys278 lie on the Cytoplasmic side of the membrane.

It belongs to the tetraspanin (TM4SF) family.

The protein resides in the membrane. Functionally, may be involved in the regulation of cell differentiation. The sequence is that of Tetraspanin-13 (TET13) from Arabidopsis thaliana (Mouse-ear cress).